The following is a 366-amino-acid chain: Flagellar P-ring protein (366 aa).

The signal sequence occupies residues 1–20 (MVIKFLSALILLLVTTAAQA).

It belongs to the FlgI family. In terms of assembly, the basal body constitutes a major portion of the flagellar organelle and consists of four rings (L,P,S, and M) mounted on a central rod.

Its subcellular location is the periplasm. The protein resides in the bacterial flagellum basal body. Assembles around the rod to form the L-ring and probably protects the motor/basal body from shearing forces during rotation. The chain is Flagellar P-ring protein from Escherichia coli (strain UTI89 / UPEC).